Reading from the N-terminus, the 116-residue chain is Ribosome-binding factor A (116 aa).

Belongs to the RbfA family. In terms of assembly, monomer. Binds 30S ribosomal subunits, but not 50S ribosomal subunits or 70S ribosomes.

It is found in the cytoplasm. In terms of biological role, one of several proteins that assist in the late maturation steps of the functional core of the 30S ribosomal subunit. Associates with free 30S ribosomal subunits (but not with 30S subunits that are part of 70S ribosomes or polysomes). Required for efficient processing of 16S rRNA. May interact with the 5'-terminal helix region of 16S rRNA. This is Ribosome-binding factor A from Chlorobium phaeobacteroides (strain BS1).